We begin with the raw amino-acid sequence, 489 residues long: Threonine/serine exporter (489 aa).

Transmembrane regions (helical) follow at residues 151–171 (GFPV…VLLG), 174–194 (WQVS…TSFL), 206–226 (VVGG…ALQF), 233–253 (SQII…VQSL), 268–288 (FFET…GIQL), 314–334 (IIAG…EWSS), 335–355 (VIIA…FVVY), 356–376 (LGPV…GGLL), 381–401 (LIPP…GLAI), and 420–440 (IAVA…GEWI). The disordered stretch occupies residues 464 to 489 (FQEEAEQNQRRQRKRPKTNQRFGNKR). Basic residues predominate over residues 473 to 489 (RRQRKRPKTNQRFGNKR).

This sequence belongs to the ThrE exporter (TC 2.A.79) family.

The protein resides in the cell membrane. It carries out the reaction L-threonine(in) + H(+)(out) = L-threonine(out) + H(+)(in). Transport is inhibited by the proton ionophore carbonyl cyanide m-chlorophenylhydrazone (CCCP). In terms of biological role, catalyzes the export of L-threonine and L-serine from the cell to the extracellular environment. Export is dependent on the proton motive force. The sequence is that of Threonine/serine exporter from Corynebacterium glutamicum (Brevibacterium saccharolyticum).